Here is a 260-residue protein sequence, read N- to C-terminus: Putative [LysW]-aminoadipate/[LysW]-glutamate kinase (260 aa).

Substrate is bound by residues 35–36, Arg-62, and Asn-162; that span reads GG.

It belongs to the acetylglutamate kinase family. LysZ subfamily.

Its subcellular location is the cytoplasm. The enzyme catalyses [amino-group carrier protein]-C-terminal-N-(1,4-dicarboxybutan-1-yl)-L-glutamine + ATP = [amino-group carrier protein]-C-terminal-N-(1-carboxy-5-phosphooxy-5-oxopentan-1-yl)-L-glutamine + ADP. It carries out the reaction [amino-group carrier protein]-C-terminal-gamma-(L-glutamyl)-L-glutamate + ATP = [amino-group carrier protein]-C-terminal-gamma-(5-phospho-L-glutamyl)-L-glutamate + ADP. It participates in amino-acid biosynthesis; L-lysine biosynthesis via AAA pathway; L-lysine from L-alpha-aminoadipate (Thermus route): step 2/5. It functions in the pathway amino-acid biosynthesis; L-arginine biosynthesis. Involved in both the arginine and lysine biosynthetic pathways. Phosphorylates the LysW-bound precursors glutamate (for arginine biosynthesis), respectively alpha-aminoadipate (for lysine biosynthesis). This is Putative [LysW]-aminoadipate/[LysW]-glutamate kinase from Pyrobaculum neutrophilum (strain DSM 2338 / JCM 9278 / NBRC 100436 / V24Sta) (Thermoproteus neutrophilus).